A 452-amino-acid chain; its full sequence is Phosphoglucosamine mutase (452 aa).

The active-site Phosphoserine intermediate is Ser88. Positions 88, 234, 236, and 238 each coordinate Mg(2+). At Ser88 the chain carries Phosphoserine.

It belongs to the phosphohexose mutase family. The cofactor is Mg(2+). Activated by phosphorylation.

It carries out the reaction alpha-D-glucosamine 1-phosphate = D-glucosamine 6-phosphate. Its function is as follows. Catalyzes the conversion of glucosamine-6-phosphate to glucosamine-1-phosphate. The sequence is that of Phosphoglucosamine mutase from Methanococcus aeolicus (strain ATCC BAA-1280 / DSM 17508 / OCM 812 / Nankai-3).